The chain runs to 523 residues: Factor arrest protein 8 (523 aa).

Residues 26–76 (TKNERDRITWELERSEMKARIAELEGENRDLKHQLNQIQSKAVSPEGEKEE) are a coiled coil. The tract at residues 61–80 (NQIQSKAVSPEGEKEEKHVP) is disordered. The span at 71 to 80 (EGEKEEKHVP) shows a compositional bias: basic and acidic residues. At Ser-115 the chain carries Phosphoserine. A Phosphothreonine modification is found at Thr-132. Residues 150–171 (ALLDTKPNPKQGPSESPSPTKV) form a disordered region. Residues 160–171 (QGPSESPSPTKV) are compositionally biased toward polar residues.

Component of a complex at least composed of FAR3, FAR7, FAR8, FAR10, FAR11 and VPS64.

It localises to the cytoplasm. The protein localises to the endoplasmic reticulum. In terms of biological role, participates in the control of the reentry into the cell cycle following pheromone treatment. This Saccharomyces cerevisiae (strain ATCC 204508 / S288c) (Baker's yeast) protein is Factor arrest protein 8 (FAR8).